Here is a 499-residue protein sequence, read N- to C-terminus: Tyrosine-protein kinase Blk (499 aa).

Residues 1 to 34 (MGLLSSKRQVSEKGKGWSPVKIRTQDKAPPPLPP) are disordered. G2 carries the N-myristoyl glycine lipid modification. One can recognise an SH3 domain in the interval 52–112 (EEERFVVALF…PSNFVAPVET (61 aa)). The SH2 domain maps to 118-214 (WFFRTISRKD…GLCQKLTLPC (97 aa)). The 254-residue stretch at 235–488 (LKLVRKLGSG…FLQSVLEDFY (254 aa)) folds into the Protein kinase domain. Residues 241-249 (LGSGQFGEV) and K263 contribute to the ATP site. D354 functions as the Proton acceptor in the catalytic mechanism. A Phosphotyrosine; by autocatalysis modification is found at Y383.

Belongs to the protein kinase superfamily. Tyr protein kinase family. SRC subfamily. As to quaternary structure, interacts with CBL (via SH2 domain). Interacts with CD79A and CD79B (via SH2 domain). In terms of processing, phosphorylated on tyrosine residues after antibody-mediated surface engagement of the B-cell antigen receptor (BCR). Ubiquitination of activated BLK by the UBE3A ubiquitin protein ligase leads to its degradation by the ubiquitin-proteasome pathway. As to expression, expressed in immature Vgamma2 gamma-delta T-cells (at protein level). Expressed in the B-cell lineage.

Its subcellular location is the cell membrane. The enzyme catalyses L-tyrosyl-[protein] + ATP = O-phospho-L-tyrosyl-[protein] + ADP + H(+). With respect to regulation, antibody-mediated surface engagement of the B-cell antigen receptor (BCR) which results in the phosphorylation of BLK on tyrosine residues, stimulates the enzymatic activity. In terms of biological role, non-receptor tyrosine kinase involved in B-lymphocyte development, differentiation and signaling. B-cell receptor (BCR) signaling requires a tight regulation of several protein tyrosine kinases and phosphatases, and associated coreceptors. Binding of antigen to the B-cell antigen receptor (BCR) triggers signaling that ultimately leads to B-cell activation. Signaling through BLK plays an important role in transmitting signals through surface immunoglobulins and supports the pro-B to pre-B transition, as well as the signaling for growth arrest and apoptosis downstream of B-cell receptor. Specifically binds and phosphorylates CD79A at 'Tyr-188'and 'Tyr-199', as well as CD79B at 'Tyr-196' and 'Tyr-207'. Also phosphorylates the immunoglobulin G receptor FCGR2. With FYN and LYN, plays an essential role in pre-B-cell receptor (pre-BCR)-mediated NF-kappa-B activation. Also contributes to BTK activation by indirectly stimulating BTK intramolecular autophosphorylation. In pancreatic islets, acts as a modulator of beta-cells function through the up-regulation of PDX1 and NKX6-1 and consequent stimulation of insulin secretion in response to glucose. Phosphorylates CGAS, promoting retention of CGAS in the cytosol. The protein is Tyrosine-protein kinase Blk (Blk) of Mus musculus (Mouse).